The following is a 1473-amino-acid chain: DNA topoisomerase 2 (1473 aa).

Positions 1 to 20 are disordered; the sequence is MATKLPLQNSNAANVAKAPA. Residues 9 to 20 are compositionally biased toward low complexity; sequence NSNAANVAKAPA. ATP contacts are provided by residues Asn91, Asn120, 148–150, and 161–168; these read SSN and GRNGYGAK. The interaction with DNA stretch occupies residues 345 to 347; it reads NKK. 378-380 serves as a coordination point for ATP; it reads QTK. Residues 455-569 enclose the Toprim domain; that stretch reads CTLILTEGDS…SLLQVPSFLV (115 aa). Residues Glu461, Asp538, and Asp540 each contribute to the Mg(2+) site. Residues 704–1163 enclose the Topo IIA-type catalytic domain; the sequence is IPSMVDGLKP…TPKSLWLSDL (460 aa). Residue Tyr794 is the O-(5'-phospho-DNA)-tyrosine intermediate of the active site. The tract at residues 980 to 989 is interaction with DNA; it reads KLTTTIATSN. Disordered stretches follow at residues 1195-1230, 1242-1297, and 1313-1473; these read SGAA…SYSA, KPKA…EVEE, and GSAP…EDDE. 2 stretches are compositionally biased toward basic residues: residues 1200 to 1216 and 1278 to 1288; these read KVKR…KTTK and PKGRQGAKKKA. Low complexity predominate over residues 1351-1360; sequence KPAATKAAKP. Composition is skewed to polar residues over residues 1394–1404 and 1417–1427; these read SPFNKKSSSVM and ENVAGNSSSEK. The span at 1453 to 1473 shows a compositional bias: acidic residues; the sequence is SESESANDSEFDDIEDDEDDE.

Belongs to the type II topoisomerase family. In terms of assembly, homodimer. It depends on Mg(2+) as a cofactor. Mn(2+) is required as a cofactor. The cofactor is Ca(2+).

It carries out the reaction ATP-dependent breakage, passage and rejoining of double-stranded DNA.. Its function is as follows. Control of topological states of DNA by transient breakage and subsequent rejoining of DNA strands. Topoisomerase II makes double-strand breaks. The polypeptide is DNA topoisomerase 2 (TOP2) (Arabidopsis thaliana (Mouse-ear cress)).